A 148-amino-acid polypeptide reads, in one-letter code: Hemoglobin subunit beta (148 aa).

The Globin domain maps to 3–148 (DWTDAERSAI…VVSALGRQYH (146 aa)). His-64 and His-93 together coordinate heme b.

It belongs to the globin family. As to quaternary structure, heterotetramer of two alpha chains and two beta chains. Red blood cells.

Its function is as follows. Involved in oxygen transport from gills to the various peripheral tissues. This Oncorhynchus nerka (Sockeye salmon) protein is Hemoglobin subunit beta (hbb).